Reading from the N-terminus, the 499-residue chain is Pentatricopeptide repeat-containing protein PPR5, chloroplastic (499 aa).

Residues 1 to 12 (MLACPSTSSPWP) show a composition bias toward low complexity. Positions 1 to 28 (MLACPSTSSPWPQRQPPSPCPGGGGGAT) are disordered. A chloroplast-targeting transit peptide spans 1-45 (MLACPSTSSPWPQRQPPSPCPGGGGGATRHVALAARSKRRGAGPA). PPR repeat units lie at residues 123-157 (DNGIYSKLISVMGRKGQIRMAMWLFSQMRNSGCKP), 158-193 (DTSVYNSLIGAHLHSRDKTKALAKALGYFEKMKCIE), 198-232 (TIVTYNILLRAFAQAGDTKQVDMLFKDLDESVVSP), 233-267 (DVYTYNGVLDAYGKNGMIKEMESVLVRMKSTQCRP), 268-302 (DVITFNILIDSYGRKQTFDKMEQVFKSLLRSKERP), 303-337 (THPTFNSMITNYGRARLREKAESVVEKMEELGFKP), 338-372 (NYVTQECLIIMYAHCDCVSKARQVFDELVTSQTKV), 373-407 (HLSSLNSMLEAYCMNGLHTEADRLLDTALQQCVVP), and 408-442 (NGSTYKLLYKAYTKANDKLLVQKLLKRMNKQGIVP). Residues 458–499 (DRKPRTSPGINSASKPSTDSAGDSETATSDKPEVSVWHVAAT) are disordered. The segment covering 465-484 (PGINSASKPSTDSAGDSETA) has biased composition (polar residues).

It belongs to the PPR family. P subfamily.

It localises to the plastid. Its subcellular location is the chloroplast. Functionally, involved in the biogenesis of the plastid translation machinery by promoting the splicing of group II introns in chloroplasts. Stabilizes the chloroplast trnG pre-RNA by directly binding to a group II intron, where it protects an endonuclease-sensitive site and stimulates splicing. Binds specific sites within group II intron trnG pre-RNA. Binds with high affinity to the 5'-UTR of the chloroplastic petA mRNA. This is Pentatricopeptide repeat-containing protein PPR5, chloroplastic from Zea mays (Maize).